Here is a 113-residue protein sequence, read N- to C-terminus: MNTLDFVDQSSLRDDVPAFGPGDTVNVHVKVIEGSKERIQVFKGVVIRRQGGGIRETFTVRKESYGVGVERTFPVHSPNIDHIDIVTRGDVRRAKLYYLRDLRGKKAKIKEKR.

This sequence belongs to the bacterial ribosomal protein bL19 family.

Its function is as follows. This protein is located at the 30S-50S ribosomal subunit interface and may play a role in the structure and function of the aminoacyl-tRNA binding site. The polypeptide is Large ribosomal subunit protein bL19 (Mycolicibacterium gilvum (strain PYR-GCK) (Mycobacterium gilvum (strain PYR-GCK))).